We begin with the raw amino-acid sequence, 422 residues long: MQQPQPQGQQQPGPGQQLGGQGAAPGAGGGPGGGPGPGPCLRRELKLLESIFHRGHERFRIASACLDELSCEFLLAGAGGAGAGAAPGPHLPPRGSVPGDPVRIHCNITESYPAVPPIWSVESDDPNLAAVLERLVDIKKGNTLLLQHLKRIISDLCKLYNLPQHPDVEMLDQPLPAEQCTQEDVSSEDEDEEMPEDTEDLDHYEMKEEEPAEGKKSEDDGIGKENLAILEKIKKNQRQDYLNGAVSGSVQATDRLMKELRDIYRSQSFKGGNYAVELVNDSLYDWNVKLLKVDQDSALHNDLQILKEKEGADFILLNFSFKDNFPFDPPFVRVVSPVLSGGYVLGGGAICMELLTKQGWSSAYSIESVIMQISATLVKGKARVQFGANKSQYSLTRAQQSYKSLVQIHEKNGWYTPPKEDG.

An N-acetylmethionine modification is found at Met1. Residues 1–15 are compositionally biased toward low complexity; that stretch reads MQQPQPQGQQQPGPG. 2 disordered regions span residues 1–40 and 174–221; these read MQQP…PGPC and PLPA…EDDG. Residues 16 to 35 show a composition bias toward gly residues; the sequence is QQLGGQGAAPGAGGGPGGGP. Over residues 185-200 the composition is skewed to acidic residues; sequence VSSEDEDEEMPEDTED. Residues 212–221 are compositionally biased toward basic and acidic residues; that stretch reads AEGKKSEDDG. The region spanning 251–415 is the UBC core domain; it reads QATDRLMKEL…VQIHEKNGWY (165 aa). Cys351 (glycyl thioester intermediate) is an active-site residue.

The protein belongs to the ubiquitin-conjugating enzyme family. As to quaternary structure, monomer and homodimer. Only the homodimer is linked to ubiquitin through thiolester activation. Interacts (via N-terminus) with B4GALT1 (via N-terminal cytoplasmic domain). The interaction is direct. In terms of processing, autoubiquitinated in vitro in the presence of NEDD4L. Widely expressed.

It is found in the nucleus. It localises to the cell projection. Its subcellular location is the filopodium. The protein resides in the cytoplasm. The protein localises to the cytosol. The catalysed reaction is S-ubiquitinyl-[E1 ubiquitin-activating enzyme]-L-cysteine + [E2 ubiquitin-conjugating enzyme]-L-cysteine = [E1 ubiquitin-activating enzyme]-L-cysteine + S-ubiquitinyl-[E2 ubiquitin-conjugating enzyme]-L-cysteine.. It participates in protein modification; protein ubiquitination. Its function is as follows. Catalyzes the covalent attachment of ubiquitin to other proteins. May be involved in hormonal homeostasis in females. Involved in regulation of B4GALT1 cell surface expression, B4GALT1-mediated cell adhesion to laminin and embryoid body formation. The chain is Ubiquitin-conjugating enzyme E2 Q1 (UBE2Q1) from Homo sapiens (Human).